A 449-amino-acid chain; its full sequence is GTPase Der (449 aa).

2 EngA-type G domains span residues 4-174 (PIVA…PPKT) and 183-358 (LRIA…VQRQ). Residues 10-17 (GRPNVGKS), 57-61 (DTAGV), 126-129 (NKCD), 189-196 (GRPNVGKS), 236-240 (DTAGI), and 301-304 (NKWD) contribute to the GTP site. The KH-like domain maps to 359 to 444 (KRVPTSELNN…PIVIVFRSRE (86 aa)).

It belongs to the TRAFAC class TrmE-Era-EngA-EngB-Septin-like GTPase superfamily. EngA (Der) GTPase family. Associates with the 50S ribosomal subunit.

Its function is as follows. GTPase that plays an essential role in the late steps of ribosome biogenesis. This chain is GTPase Der, found in Chloroflexus aurantiacus (strain ATCC 29366 / DSM 635 / J-10-fl).